The following is a 429-amino-acid chain: 3-phosphoshikimate 1-carboxyvinyltransferase (429 aa).

Residues Lys11, Ser12, and Arg16 each contribute to the 3-phosphoshikimate site. Lys11 is a binding site for phosphoenolpyruvate. Phosphoenolpyruvate is bound by residues Gly82 and Arg110. 3-phosphoshikimate-binding residues include Ser155, Gln157, Asp302, and Lys329. Gln157 provides a ligand contact to phosphoenolpyruvate. Asp302 (proton acceptor) is an active-site residue. Residues Arg333 and Arg385 each contribute to the phosphoenolpyruvate site.

The protein belongs to the EPSP synthase family. Monomer.

The protein resides in the cytoplasm. It catalyses the reaction 3-phosphoshikimate + phosphoenolpyruvate = 5-O-(1-carboxyvinyl)-3-phosphoshikimate + phosphate. The protein operates within metabolic intermediate biosynthesis; chorismate biosynthesis; chorismate from D-erythrose 4-phosphate and phosphoenolpyruvate: step 6/7. Functionally, catalyzes the transfer of the enolpyruvyl moiety of phosphoenolpyruvate (PEP) to the 5-hydroxyl of shikimate-3-phosphate (S3P) to produce enolpyruvyl shikimate-3-phosphate and inorganic phosphate. In Helicobacter pylori (strain G27), this protein is 3-phosphoshikimate 1-carboxyvinyltransferase.